Consider the following 425-residue polypeptide: Neuromedin-U receptor 1 (425 aa).

The Extracellular segment spans residues 1-59 (MTPPCLNCSFFPGQLSPNASTGLLSCNDSEFKEHFDLEDLNLTHEDLRLKYLGPQQVKQ). An N-linked (GlcNAc...) asparagine glycan is attached at asparagine 41. Residues 60-80 (FLPICVTYLLIFVVGTLGNGL) traverse the membrane as a helical segment. Topologically, residues 81–96 (TCTVILRQKAMHTPTN) are cytoplasmic. Residues 97–117 (FYLFSLAVSDLLVLLVGLPLE) traverse the membrane as a helical segment. At 118–137 (LYEMQHNYPFQLGAGGCYFR) the chain is on the extracellular side. Cysteine 134 and cysteine 219 are disulfide-bonded. Residues 138–158 (ILLLETVCLASVLNVTALSVE) form a helical membrane-spanning segment. Over 159-181 (RYVAVVHPLQAKSVMTRTHVRRM) the chain is Cytoplasmic. The helical transmembrane segment at 182 to 202 (LGAIWVFAILFSLPNTSLHGL) threads the bilayer. The Extracellular segment spans residues 203–235 (SPLYVPCRGPVPDSVTCTLVRPQFFYKLVIQTT). A helical transmembrane segment spans residues 236–256 (ILLFFCLPMVTISVLYLLIGL). At 257–294 (RLRRERILLQEEVKGRISAAARQASHRSIQLRDRERRQ) the chain is on the cytoplasmic side. A helical transmembrane segment spans residues 295–315 (VTKMLIALVIVFGTCWVPFHA). The Extracellular portion of the chain corresponds to 316-331 (DRLMWSMVSHWTDGLR). The chain crosses the membrane as a helical span at residues 332–352 (LAFQSVHLASGVFLYLGSAAN). Topologically, residues 353-425 (PVLYNLMSTR…GCEQETDPPE (73 aa)) are cytoplasmic. Residues 406-425 (DVPLAENRDPGCEQETDPPE) form a disordered region.

Belongs to the G-protein coupled receptor 1 family. Highly expressed in the small intestine and lung. Low expression in the central nervous system.

It is found in the cell membrane. Its function is as follows. Receptor for the neuromedin-U and neuromedin-S neuropeptides. The sequence is that of Neuromedin-U receptor 1 (Nmur1) from Rattus norvegicus (Rat).